A 782-amino-acid chain; its full sequence is LPS-assembly protein LptD (782 aa).

The first 24 residues, 1–24 (MKKNSYTRLSIAILSTLYSVSSLA), serve as a signal peptide directing secretion.

The protein belongs to the LptD family. In terms of assembly, component of the lipopolysaccharide transport and assembly complex. Interacts with LptE and LptA.

It is found in the cell outer membrane. Functionally, together with LptE, is involved in the assembly of lipopolysaccharide (LPS) at the surface of the outer membrane. This is LPS-assembly protein LptD from Pasteurella multocida (strain Pm70).